Reading from the N-terminus, the 347-residue chain is 5-deoxyribose 1-phosphate isomerase (347 aa).

Substrate is bound by residues 48-50, Arg91, and Gln198; that span reads RGA. Asp239 functions as the Proton donor in the catalytic mechanism. 249–250 contacts substrate; sequence NK.

This sequence belongs to the EIF-2B alpha/beta/delta subunits family. DrdI subfamily.

The enzyme catalyses 5-deoxy-alpha-D-ribose 1-phosphate = 5-deoxy-D-ribulose 1-phosphate. It participates in carbohydrate degradation. In terms of biological role, catalyzes the isomerization of 5-deoxy-alpha-D-ribose 1-phosphate to 5-deoxy-D-ribulose 1-phosphate, as part of a 5-deoxyribose salvage pathway that recycles this toxic radical SAM enzyme by-product to mainstream metabolites. This chain is 5-deoxyribose 1-phosphate isomerase, found in Bacillus thuringiensis subsp. konkukian (strain 97-27).